A 432-amino-acid polypeptide reads, in one-letter code: Cyclic 2,3-diphosphoglycerate synthetase (432 aa).

Belongs to the cyclic 2,3-diphosphoglycerate synthetase family.

Its subcellular location is the cytoplasm. It carries out the reaction (2R)-2,3-bisphosphoglycerate + ATP + H(+) = cyclic (2R)-2,3-bisphosphoglycerate + ADP + phosphate. Its function is as follows. Catalyzes the formation of cyclic 2,3-diphosphoglycerate (cDPG) by formation of an intramolecular phosphoanhydride bond at the expense of ATP. In Thermococcus onnurineus (strain NA1), this protein is Cyclic 2,3-diphosphoglycerate synthetase.